Consider the following 299-residue polypeptide: Quinolinate synthase (299 aa).

His21 and Ser38 together coordinate iminosuccinate. Cys83 lines the [4Fe-4S] cluster pocket. Residues 109–111 and Ser126 contribute to the iminosuccinate site; that span reads YVN. Residue Cys170 coordinates [4Fe-4S] cluster. Iminosuccinate contacts are provided by residues 196–198 and Thr213; that span reads HPE. Cys256 lines the [4Fe-4S] cluster pocket.

It belongs to the quinolinate synthase family. Type 2 subfamily. [4Fe-4S] cluster is required as a cofactor.

The protein resides in the cytoplasm. It carries out the reaction iminosuccinate + dihydroxyacetone phosphate = quinolinate + phosphate + 2 H2O + H(+). It functions in the pathway cofactor biosynthesis; NAD(+) biosynthesis; quinolinate from iminoaspartate: step 1/1. Functionally, catalyzes the condensation of iminoaspartate with dihydroxyacetone phosphate to form quinolinate. This chain is Quinolinate synthase, found in Pyrococcus abyssi (strain GE5 / Orsay).